We begin with the raw amino-acid sequence, 439 residues long: Methylenetetrahydrofolate--tRNA-(uracil-5-)-methyltransferase TrmFO (439 aa).

8 to 13 (GAGLAG) provides a ligand contact to FAD.

The protein belongs to the MnmG family. TrmFO subfamily. The cofactor is FAD.

The protein localises to the cytoplasm. It carries out the reaction uridine(54) in tRNA + (6R)-5,10-methylene-5,6,7,8-tetrahydrofolate + NADH + H(+) = 5-methyluridine(54) in tRNA + (6S)-5,6,7,8-tetrahydrofolate + NAD(+). The catalysed reaction is uridine(54) in tRNA + (6R)-5,10-methylene-5,6,7,8-tetrahydrofolate + NADPH + H(+) = 5-methyluridine(54) in tRNA + (6S)-5,6,7,8-tetrahydrofolate + NADP(+). Functionally, catalyzes the folate-dependent formation of 5-methyl-uridine at position 54 (M-5-U54) in all tRNAs. The chain is Methylenetetrahydrofolate--tRNA-(uracil-5-)-methyltransferase TrmFO from Magnetococcus marinus (strain ATCC BAA-1437 / JCM 17883 / MC-1).